Here is a 306-residue protein sequence, read N- to C-terminus: Recombination-associated protein RdgC (306 aa).

It belongs to the RdgC family.

It localises to the cytoplasm. It is found in the nucleoid. In terms of biological role, may be involved in recombination. The sequence is that of Recombination-associated protein RdgC from Pseudomonas aeruginosa (strain LESB58).